Reading from the N-terminus, the 1117-residue chain is Cytospin-A (1117 aa).

Disordered stretches follow at residues 1 to 176 (MKKA…NQIS), 293 to 323 (SLSP…GSVE), and 358 to 390 (SSDD…NASE). A compositionally biased stretch (low complexity) spans 45 to 90 (TAASLSKTKSSDDLLAGMAGGVTVTNGVKGKKSTCPSAAPSASAPA). Over residues 93-117 (TVENKSKISTGTASSTKRSTSTGNK) the composition is skewed to polar residues. Basic and acidic residues-rich tracts occupy residues 120 to 131 (SSTRERLRERTR) and 158 to 171 (TATE…KSKS). A coiled-coil region spans residues 168–280 (KSKSDNQISD…LNALGFSLEQ (113 aa)). A compositionally biased stretch (polar residues) spans 293 to 303 (SLSPEITPGNQ). Residues 358 to 377 (SSDDALDAPSSSESEGIPSI) are compositionally biased toward low complexity. A phosphoserine mark is found at S384, S385, and S389. 2 coiled-coil regions span residues 394–449 (ACLT…MESL) and 487–807 (RYME…RGRV). Phosphoserine is present on residues S868, S881, and S887. Residues 920-997 (TSSASRPASL…PTTRSRIREE (78 aa)) are disordered. Residues 946 to 956 (RSSEEVKRDIS) are compositionally biased toward basic and acidic residues. Residues 971 to 990 (TTSPQLSLSSSPTASVTPTT) show a composition bias toward low complexity. Residues 1011–1116 (GSKRNALLKW…YVTAIYKYFE (106 aa)) form the Calponin-homology (CH) domain.

The protein belongs to the cytospin-A family. As to quaternary structure, may interact with both microtubules and actin cytoskeleton.

The protein resides in the cytoplasm. It localises to the cytoskeleton. It is found in the spindle. Its subcellular location is the cell junction. The protein localises to the gap junction. In terms of biological role, involved in cytokinesis and spindle organization. May play a role in actin cytoskeleton organization and microtubule stabilization and hence required for proper cell adhesion and migration. In Homo sapiens (Human), this protein is Cytospin-A (SPECC1L).